The following is a 233-amino-acid chain: Esterase FUS5 (233 aa).

Catalysis depends on charge relay system residues Ser-105, Asp-159, and His-187.

It belongs to the LovG family.

Functionally, esterase; part of the gene cluster that mediates the biosynthesis of the mycotoxin fusarin C. Within the cluster, FUS1, FUS2, FUS8 and FUS9 are sufficient for fusarin production. The other FUS cluster members are not essential for fusarin C biosynthesis. The sequence is that of Esterase FUS5 from Gibberella moniliformis (strain M3125 / FGSC 7600) (Maize ear and stalk rot fungus).